The chain runs to 195 residues: Molybdenum cofactor guanylyltransferase (195 aa).

Residues 12-14 (LAG), Lys25, Asn53, Asp70, and Asp100 contribute to the GTP site. Asp100 contributes to the Mg(2+) binding site.

The protein belongs to the MobA family. Monomer. Mg(2+) is required as a cofactor.

Its subcellular location is the cytoplasm. The catalysed reaction is Mo-molybdopterin + GTP + H(+) = Mo-molybdopterin guanine dinucleotide + diphosphate. In terms of biological role, transfers a GMP moiety from GTP to Mo-molybdopterin (Mo-MPT) cofactor (Moco or molybdenum cofactor) to form Mo-molybdopterin guanine dinucleotide (Mo-MGD) cofactor. This chain is Molybdenum cofactor guanylyltransferase, found in Vibrio campbellii (strain ATCC BAA-1116).